Here is a 260-residue protein sequence, read N- to C-terminus: Intermembrane phospholipid transport system permease protein MlaE (260 aa).

Over 1–50 (MLLNALASLGHKGIKTLRTFGRAGLMLFNALVGKPEFRKHAPLLVRQLYN) the chain is Cytoplasmic. Residues 51–71 (VGVLSMLIIVVSGVFIGMVLG) traverse the membrane as a helical segment. Residues 72–88 (LQGYLVLTTYSAETSLG) are Periplasmic-facing. A helical transmembrane segment spans residues 89–109 (MLVALSLLRELGPVVAALLFA). The Cytoplasmic portion of the chain corresponds to 110–147 (GRAGSALTAEIGLMRATEQLSSMEMMAVDPLRRVISPR). A helical transmembrane segment spans residues 148–168 (FWAGVISLPLLTVIFVAVGIW). At 169–198 (GGSLVGVSWKGIDSGFFWSAMQNAVDWRMD) the chain is on the periplasmic side. The chain crosses the membrane as a helical span at residues 199–219 (LVNCLIKSVVFAITVTWISLF). The Cytoplasmic portion of the chain corresponds to 220-238 (NGYDAIPTSAGISRATTRT). Residues 239–259 (VVHSSLAVLGLDFVLTALMFG) traverse the membrane as a helical segment. Position 260 (N260) is a topological domain, periplasmic.

The protein belongs to the MlaE permease family. In terms of assembly, the complex is composed of two ATP-binding proteins (MlaF), two transmembrane proteins (MlaE), two cytoplasmic solute-binding proteins (MlaB) and six periplasmic solute-binding proteins (MlaD).

Its subcellular location is the cell inner membrane. Functionally, part of the ABC transporter complex MlaFEDB, which is involved in a phospholipid transport pathway that maintains lipid asymmetry in the outer membrane by retrograde trafficking of phospholipids from the outer membrane to the inner membrane. Probably responsible for the translocation of the substrate across the membrane. This is Intermembrane phospholipid transport system permease protein MlaE from Escherichia coli O157:H7.